The following is a 286-amino-acid chain: Meiotically up-regulated gene 64 protein (286 aa).

The protein resides in the cytoplasm. Has a role in meiosis. The protein is Meiotically up-regulated gene 64 protein (mug64) of Schizosaccharomyces pombe (strain 972 / ATCC 24843) (Fission yeast).